The following is a 375-amino-acid chain: 23S rRNA (uracil(747)-C(5))-methyltransferase RlmC (375 aa).

The [4Fe-4S] cluster site is built by cysteine 3, cysteine 11, cysteine 14, and cysteine 87. The S-adenosyl-L-methionine site is built by glutamine 212, phenylalanine 241, glutamate 262, and asparagine 307. Catalysis depends on cysteine 334, which acts as the Nucleophile.

The protein belongs to the class I-like SAM-binding methyltransferase superfamily. RNA M5U methyltransferase family. RlmC subfamily.

It catalyses the reaction uridine(747) in 23S rRNA + S-adenosyl-L-methionine = 5-methyluridine(747) in 23S rRNA + S-adenosyl-L-homocysteine + H(+). Functionally, catalyzes the formation of 5-methyl-uridine at position 747 (m5U747) in 23S rRNA. This is 23S rRNA (uracil(747)-C(5))-methyltransferase RlmC from Serratia proteamaculans (strain 568).